The primary structure comprises 363 residues: UDP-3-O-acylglucosamine N-acyltransferase (363 aa).

His-266 functions as the Proton acceptor in the catalytic mechanism.

Belongs to the transferase hexapeptide repeat family. LpxD subfamily. As to quaternary structure, homotrimer.

The enzyme catalyses a UDP-3-O-[(3R)-3-hydroxyacyl]-alpha-D-glucosamine + a (3R)-hydroxyacyl-[ACP] = a UDP-2-N,3-O-bis[(3R)-3-hydroxyacyl]-alpha-D-glucosamine + holo-[ACP] + H(+). Its pathway is bacterial outer membrane biogenesis; LPS lipid A biosynthesis. Functionally, catalyzes the N-acylation of UDP-3-O-acylglucosamine using 3-hydroxyacyl-ACP as the acyl donor. Is involved in the biosynthesis of lipid A, a phosphorylated glycolipid that anchors the lipopolysaccharide to the outer membrane of the cell. The chain is UDP-3-O-acylglucosamine N-acyltransferase from Bordetella parapertussis (strain 12822 / ATCC BAA-587 / NCTC 13253).